The chain runs to 489 residues: tRNA(Ile)-lysidine synthase (489 aa).

35 to 40 serves as a coordination point for ATP; it reads SGGLDS.

Belongs to the tRNA(Ile)-lysidine synthase family.

The protein localises to the cytoplasm. The enzyme catalyses cytidine(34) in tRNA(Ile2) + L-lysine + ATP = lysidine(34) in tRNA(Ile2) + AMP + diphosphate + H(+). Ligates lysine onto the cytidine present at position 34 of the AUA codon-specific tRNA(Ile) that contains the anticodon CAU, in an ATP-dependent manner. Cytidine is converted to lysidine, thus changing the amino acid specificity of the tRNA from methionine to isoleucine. In Burkholderia mallei (strain ATCC 23344), this protein is tRNA(Ile)-lysidine synthase.